The following is a 145-amino-acid chain: UPF0201 protein M164_1168 (145 aa).

It belongs to the UPF0201 family.

The polypeptide is UPF0201 protein M164_1168 (Saccharolobus islandicus (strain M.16.4 / Kamchatka #3) (Sulfolobus islandicus)).